We begin with the raw amino-acid sequence, 357 residues long: Endo-1,4-beta-xylanase Xyn11B (357 aa).

An N-terminal signal peptide occupies residues 1–27 (MKIFQNTKNVIVSIAWAAALCTSAVSA). The region spanning 29 to 226 (TLTSNSTGTN…SRGSSDITVS (198 aa)) is the GH11 domain. Glutamate 116 serves as the catalytic Nucleophile. The Proton donor role is filled by glutamate 213. Positions 220–245 (SSDITVSQGGSSGGGNSSSSSSASGG) are disordered.

The protein belongs to the glycosyl hydrolase 11 (cellulase G) family.

It is found in the secreted. The enzyme catalyses Endohydrolysis of (1-&gt;4)-beta-D-xylosidic linkages in xylans.. The protein operates within glycan degradation; xylan degradation. Its function is as follows. Endo-acting xylanase which specifically cleaves internal linkages on the xylan backbone, releasing xylooligosaccharides. Is able to hydrolyze glucuronoxylan and the arabinoxylan from wheat. This chain is Endo-1,4-beta-xylanase Xyn11B (xyn11B), found in Cellvibrio japonicus (Pseudomonas fluorescens subsp. cellulosa).